The sequence spans 372 residues: Chorismate synthase (372 aa).

NADP(+) is bound by residues Arg48 and Arg54. Residues 125–127 (RSS), 238–239 (NA), Gly278, 293–297 (KPTSS), and Arg319 each bind FMN.

Belongs to the chorismate synthase family. In terms of assembly, homotetramer. The cofactor is FMNH2.

The enzyme catalyses 5-O-(1-carboxyvinyl)-3-phosphoshikimate = chorismate + phosphate. Its pathway is metabolic intermediate biosynthesis; chorismate biosynthesis; chorismate from D-erythrose 4-phosphate and phosphoenolpyruvate: step 7/7. Its function is as follows. Catalyzes the anti-1,4-elimination of the C-3 phosphate and the C-6 proR hydrogen from 5-enolpyruvylshikimate-3-phosphate (EPSP) to yield chorismate, which is the branch point compound that serves as the starting substrate for the three terminal pathways of aromatic amino acid biosynthesis. This reaction introduces a second double bond into the aromatic ring system. The chain is Chorismate synthase from Xylella fastidiosa (strain M23).